The chain runs to 160 residues: Phosphopantetheine adenylyltransferase (160 aa).

A substrate-binding site is contributed by Thr-10. ATP is bound by residues 10 to 11 (TF) and His-18. Positions 42, 74, and 88 each coordinate substrate. ATP contacts are provided by residues 89 to 91 (GLR), Glu-99, and 124 to 130 (NSFISST).

The protein belongs to the bacterial CoaD family. As to quaternary structure, homohexamer. It depends on Mg(2+) as a cofactor.

It localises to the cytoplasm. The enzyme catalyses (R)-4'-phosphopantetheine + ATP + H(+) = 3'-dephospho-CoA + diphosphate. Its pathway is cofactor biosynthesis; coenzyme A biosynthesis; CoA from (R)-pantothenate: step 4/5. In terms of biological role, reversibly transfers an adenylyl group from ATP to 4'-phosphopantetheine, yielding dephospho-CoA (dPCoA) and pyrophosphate. This chain is Phosphopantetheine adenylyltransferase, found in Photobacterium damsela subsp. piscicida (Pasteurella piscicida).